The chain runs to 62 residues: Potassium channel toxin alpha-KTx Tx790 (62 aa).

The first 18 residues, 1–18 (MQKLFIVLVLFCILRLDA), serve as a signal peptide directing secretion. Disulfide bonds link C28-C46, C33-C59, and C37-C61.

This sequence belongs to the short scorpion toxin superfamily. Potassium channel inhibitor family. Alpha-KTx 23 subfamily. As to expression, expressed by the venom gland.

The protein resides in the secreted. May block potassium channels. This chain is Potassium channel toxin alpha-KTx Tx790, found in Buthus israelis (Israeli scorpion).